A 231-amino-acid polypeptide reads, in one-letter code: ATP-dependent dethiobiotin synthetase BioD 2 (231 aa).

13-18 contacts ATP; it reads SVGKTV. Mg(2+) is bound at residue Thr-17. Lys-38 is a catalytic residue. Residues Asp-55, 112–115, 172–173, 201–203, and Gln-208 contribute to the ATP site; these read EGTG, NR, and PYL. Asp-55 and Glu-112 together coordinate Mg(2+).

Belongs to the dethiobiotin synthetase family. Homodimer. It depends on Mg(2+) as a cofactor.

The protein resides in the cytoplasm. The enzyme catalyses (7R,8S)-7,8-diammoniononanoate + CO2 + ATP = (4R,5S)-dethiobiotin + ADP + phosphate + 3 H(+). It participates in cofactor biosynthesis; biotin biosynthesis; biotin from 7,8-diaminononanoate: step 1/2. Catalyzes a mechanistically unusual reaction, the ATP-dependent insertion of CO2 between the N7 and N8 nitrogen atoms of 7,8-diaminopelargonic acid (DAPA, also called 7,8-diammoniononanoate) to form a ureido ring. In Salmonella typhimurium (strain LT2 / SGSC1412 / ATCC 700720), this protein is ATP-dependent dethiobiotin synthetase BioD 2.